We begin with the raw amino-acid sequence, 466 residues long: MKKTRFVLNSIALGLSVLSTSFVAHVAQATLPSFVSEQNSLAPMLEKVQPAVVTLSVEGKAKVDSRSPFLDDIPEEFKFFFGDRFAEQFGGRGESKRNFRGLGSGVIINASKGYVLTNNHVIDGADKITVQLQDGREFKAKLVGKDEQSDIALVQLEKPSNLTEIKFADSDKLRVGDFTVAIGNPFGLGQTVTSGIVSALGRSTGSDSGTYENYIQTDAAVNRGNSGGALVNLNGELIGINTAIISPSGGNAGIAFAIPSNQASNLVQQILEFGQVRRGLLGIKGGELNADLAKAFNVSAQQGAFVSEVLPKSAAEKAGLKAGDIITAMNGQKISSFAEIRAKIATTGAGKEISLTYLRDGKSHDVKMKLQADDSSQLSSKTELPALDGATLKDYDAKGVKGIEITKIQPNSLAAQRGLKSGDIIIGINRQMIENIRELNKVLETEPSAVALNILRGDSNFYLLVQ.

The N-terminal stretch at 1-29 (MKKTRFVLNSIALGLSVLSTSFVAHVAQA) is a signal peptide. Residues His-120, Asp-150, and Ser-226 each act as charge relay system in the active site. PDZ domains lie at 270 to 361 (ILEF…LRDG) and 367 to 458 (KMKL…LRGD).

Belongs to the peptidase S1C family.

It is found in the periplasm. This is Probable periplasmic serine protease do/HhoA-like from Haemophilus influenzae (strain ATCC 51907 / DSM 11121 / KW20 / Rd).